The sequence spans 38 residues: Defensin (38 aa).

Disulfide bonds link Cys4–Cys26, Cys11–Cys34, and Cys15–Cys36.

The protein belongs to the invertebrate defensin family. Type 2 subfamily.

It localises to the secreted. In terms of biological role, mediates the inducible antibacterial activity in larvae of A.cyanea. In Aeshna cyanea (Southern hawker dragonfly), this protein is Defensin.